Reading from the N-terminus, the 110-residue chain is Protein SPIRAL1-like 2 (110 aa).

Residues 28–110 form a disordered region; that stretch reads AVNKTPAETE…LDYLFGGGSN (83 aa). Residues 40-52 are compositionally biased toward low complexity; sequence AHAPPTQAAAANA. Polar residues predominate over residues 63-82; it reads LNSNSANNYMRAEGQNTGNF. Ser-67 carries the post-translational modification Phosphoserine. The segment covering 95–110 has biased composition (gly residues); it reads PGGGSSLDYLFGGGSN.

It belongs to the SPIRAL1 family. As to expression, ubiquitous.

Functionally, acts redundantly with SPR1 in maintaining the cortical microtubules organization essential for anisotropic cell growth. The sequence is that of Protein SPIRAL1-like 2 (SP1L2) from Arabidopsis thaliana (Mouse-ear cress).